The chain runs to 486 residues: Betaine aldehyde dehydrogenase (486 aa).

The K(+) site is built by T23 and D90. 147–149 is an NAD(+) binding site; the sequence is GAW. The active-site Charge relay system is K159. NAD(+) is bound by residues 173–176 and 226–229; these read KPSE and ESGT. Position 241 (L241) interacts with K(+). E247 acts as the Proton acceptor in catalysis. NAD(+) contacts are provided by G249, C281, and E382. The active-site Nucleophile is the C281. Cysteine sulfenic acid (-SOH) is present on C281. 2 residues coordinate K(+): K452 and G455. E459 (charge relay system) is an active-site residue.

Belongs to the aldehyde dehydrogenase family. In terms of assembly, dimer of dimers. Requires K(+) as cofactor.

It carries out the reaction betaine aldehyde + NAD(+) + H2O = glycine betaine + NADH + 2 H(+). It participates in amine and polyamine biosynthesis; betaine biosynthesis via choline pathway; betaine from betaine aldehyde: step 1/1. Functionally, involved in the biosynthesis of the osmoprotectant glycine betaine. Catalyzes the irreversible oxidation of betaine aldehyde to the corresponding acid. This is Betaine aldehyde dehydrogenase from Vibrio vulnificus (strain CMCP6).